Here is a 433-residue protein sequence, read N- to C-terminus: D-amino acid dehydrogenase (433 aa).

3–17 (VLVLGSGVIGTTSAY) provides a ligand contact to FAD.

The protein belongs to the DadA oxidoreductase family. It depends on FAD as a cofactor.

The enzyme catalyses a D-alpha-amino acid + A + H2O = a 2-oxocarboxylate + AH2 + NH4(+). It participates in amino-acid degradation; D-alanine degradation; NH(3) and pyruvate from D-alanine: step 1/1. Functionally, oxidative deamination of D-amino acids. This is D-amino acid dehydrogenase from Pseudomonas syringae pv. syringae (strain B728a).